A 353-amino-acid chain; its full sequence is Photosystem II D2 protein (353 aa).

An N-acetylthreonine modification is found at T2. T2 is modified (phosphothreonine). Residues 41–61 (CAYFALGGWFTGTTFVTSWYT) form a helical membrane-spanning segment. H118 serves as a coordination point for chlorophyll a. Residues 125-141 (GFMLRQFELARSVQLRP) traverse the membrane as a helical segment. Residues Q130 and N143 each contribute to the pheophytin a site. The helical transmembrane segment at 153 to 166 (VFVSVFLIYPLGQS) threads the bilayer. A chlorophyll a-binding site is contributed by H198. A helical membrane pass occupies residues 208-228 (AALLCAIHGATVENTLFEDGD). 2 residues coordinate a plastoquinone: H215 and F262. H215 provides a ligand contact to Fe cation. H269 provides a ligand contact to Fe cation. A helical transmembrane segment spans residues 279-295 (GLWMSAIGVVGLALNLR).

The protein belongs to the reaction center PufL/M/PsbA/D family. In terms of assembly, PSII is composed of 1 copy each of membrane proteins PsbA, PsbB, PsbC, PsbD, PsbE, PsbF, PsbH, PsbI, PsbJ, PsbK, PsbL, PsbM, PsbT, PsbX, PsbY, PsbZ, Psb30/Ycf12, at least 3 peripheral proteins of the oxygen-evolving complex and a large number of cofactors. It forms dimeric complexes. The cofactor is The D1/D2 heterodimer binds P680, chlorophylls that are the primary electron donor of PSII, and subsequent electron acceptors. It shares a non-heme iron and each subunit binds pheophytin, quinone, additional chlorophylls, carotenoids and lipids. There is also a Cl(-1) ion associated with D1 and D2, which is required for oxygen evolution. The PSII complex binds additional chlorophylls, carotenoids and specific lipids..

Its subcellular location is the plastid. The protein resides in the chloroplast thylakoid membrane. It catalyses the reaction 2 a plastoquinone + 4 hnu + 2 H2O = 2 a plastoquinol + O2. Photosystem II (PSII) is a light-driven water:plastoquinone oxidoreductase that uses light energy to abstract electrons from H(2)O, generating O(2) and a proton gradient subsequently used for ATP formation. It consists of a core antenna complex that captures photons, and an electron transfer chain that converts photonic excitation into a charge separation. The D1/D2 (PsbA/PsbD) reaction center heterodimer binds P680, the primary electron donor of PSII as well as several subsequent electron acceptors. D2 is needed for assembly of a stable PSII complex. This is Photosystem II D2 protein from Phalaenopsis aphrodite subsp. formosana (Moth orchid).